The chain runs to 389 residues: Alanine racemase TOXG (389 aa).

The residue at position 235 (K235) is an N6-(pyridoxal phosphate)lysine.

It belongs to the threonine aldolase family. Requires pyridoxal 5'-phosphate as cofactor.

The enzyme catalyses L-alanine = D-alanine. It participates in mycotoxin biosynthesis; HC-toxin biosynthesis. Functionally, alanine racemase, part of the diffuse TOX2 gene cluster that mediates the biosynthesis of the HC-toxin, cyclic tetrapeptide of structure cyclo(D-Pro-L-Ala-D-Ala-L-Aeo), where Aeo stands for 2-amino-9,10-epoxi-8-oxodecanoic acid. HC-toxin is a determinant of specificity and virulence in the interaction between the producing fungus and its host, maize. TOXG catalyzes the conversion of L-alanine into D-alanine, an essential precursor for the production of the major forms of HC-toxin by the non-ribosomal peptide synthetase HTS1. This chain is Alanine racemase TOXG, found in Cochliobolus carbonum (Maize leaf spot fungus).